The chain runs to 89 residues: Small ribosomal subunit protein uS15 (89 aa).

The protein belongs to the universal ribosomal protein uS15 family. In terms of assembly, part of the 30S ribosomal subunit. Forms a bridge to the 50S subunit in the 70S ribosome, contacting the 23S rRNA.

In terms of biological role, one of the primary rRNA binding proteins, it binds directly to 16S rRNA where it helps nucleate assembly of the platform of the 30S subunit by binding and bridging several RNA helices of the 16S rRNA. Forms an intersubunit bridge (bridge B4) with the 23S rRNA of the 50S subunit in the ribosome. In Crocosphaera subtropica (strain ATCC 51142 / BH68) (Cyanothece sp. (strain ATCC 51142)), this protein is Small ribosomal subunit protein uS15.